We begin with the raw amino-acid sequence, 164 residues long: Pathogenesis-related protein PRB1-2 (164 aa).

Residues 1–24 (MQTPKLAILLALAMAAAMVNLSQA) form the signal peptide. A Pyrrolidone carboxylic acid modification is found at Gln25. Positions 34–152 (PHNAARSAVG…NRGVFITCNY (119 aa)) constitute an SCP domain. Intrachain disulfides connect Cys68–Cys140, Cys113–Cys119, and Cys135–Cys150.

It belongs to the CRISP family.

In terms of biological role, probably involved in the defense reaction of plants against pathogens. The sequence is that of Pathogenesis-related protein PRB1-2 from Hordeum vulgare (Barley).